Reading from the N-terminus, the 336-residue chain is MTFRVAVIPGDGIGPELYEGSKRIIAKLIEKYNLDIDLIEVEAGDVALNKYGEALPRHTLDVIEKADMILKGPVGETAMDVVVKLRQMYDMYANIRPAKSLPNVQSKYPNVDLVIVRENTEDLYKGFEFVTSTGVTIAIKVTTEFASKRIVNVALNYALMRRRKVTCVHKANVMRVTDGLFASVCREILKGKVNFEEMYVDAAAANLVRDPTRFDVIVTSNVYGDILSDEASQIAGSLGLAPSANIGDRKSMFEPVHGAAFDIAGKGIANPTAFLLSVSMMLSRMYELSKENKYILASKSLENAIIETYKSGNKLTEDVGGSAKLKDMVDEIYKYM.

Substrate contacts are provided by arginine 86, arginine 96, arginine 117, and aspartate 201. 3 residues coordinate Mg(2+): aspartate 201, aspartate 225, and aspartate 229. 258 to 270 (GAAFDIAGKGIAN) serves as a coordination point for NAD(+).

This sequence belongs to the isocitrate and isopropylmalate dehydrogenases family. Homotetramer. The cofactor is Mg(2+). Mn(2+) serves as cofactor.

The protein localises to the cytoplasm. The catalysed reaction is (2R,3S)-3-isopropylmalate + NAD(+) = 4-methyl-2-oxopentanoate + CO2 + NADH. It participates in amino-acid biosynthesis; L-leucine biosynthesis; L-leucine from 3-methyl-2-oxobutanoate: step 3/4. Catalyzes the oxidation of 3-carboxy-2-hydroxy-4-methylpentanoate (3-isopropylmalate) to 3-carboxy-4-methyl-2-oxopentanoate. The product decarboxylates to 4-methyl-2 oxopentanoate. This chain is 3-isopropylmalate dehydrogenase (leuB), found in Saccharolobus solfataricus (strain ATCC 35092 / DSM 1617 / JCM 11322 / P2) (Sulfolobus solfataricus).